The sequence spans 265 residues: Mlc titration factor A (265 aa).

Zn(2+) is bound by residues His-111, His-148, His-152, and Glu-211.

The protein belongs to the MtfA family. Interacts with Mlc. Requires Zn(2+) as cofactor.

The protein localises to the cytoplasm. Involved in the modulation of the activity of the glucose-phosphotransferase system (glucose-PTS). Interacts with the transcriptional repressor Mlc, preventing its interaction with DNA and leading to the modulation of expression of genes regulated by Mlc, including ptsG, which encodes the PTS system glucose-specific EIICB component. Functionally, shows zinc-dependent metallopeptidase activity. This chain is Mlc titration factor A, found in Pectobacterium atrosepticum (strain SCRI 1043 / ATCC BAA-672) (Erwinia carotovora subsp. atroseptica).